We begin with the raw amino-acid sequence, 502 residues long: ATP synthase subunit alpha (502 aa).

169–176 contacts ATP; sequence GDRATGKT.

The protein belongs to the ATPase alpha/beta chains family. In terms of assembly, F-type ATPases have 2 components, CF(1) - the catalytic core - and CF(0) - the membrane proton channel. CF(1) has five subunits: alpha(3), beta(3), gamma(1), delta(1), epsilon(1). CF(0) has three main subunits: a(1), b(2) and c(9-12). The alpha and beta chains form an alternating ring which encloses part of the gamma chain. CF(1) is attached to CF(0) by a central stalk formed by the gamma and epsilon chains, while a peripheral stalk is formed by the delta and b chains.

It is found in the cell inner membrane. The catalysed reaction is ATP + H2O + 4 H(+)(in) = ADP + phosphate + 5 H(+)(out). Its function is as follows. Produces ATP from ADP in the presence of a proton gradient across the membrane. The alpha chain is a regulatory subunit. In Hydrogenobaculum sp. (strain Y04AAS1), this protein is ATP synthase subunit alpha.